Consider the following 333-residue polypeptide: MPARGGSARPGRGALKPVSVTLLPDTEQPPFLGRARRPGNARAGSLVTGYHEVGQMPAPLSRKIGQKKQRLADSEQQQTPKERLLSTPGLRRSIYFSSPEDHSGRLGPEFFDQPAVTLARAFLGQVLVRRLADGTELRGRIVETEAYLGPEDEAAHSRGGRQTPRNRGMFMKPGTLYVYLIYGMYFCLNVSSQGAGACVLLRALEPLEGLETMRQLRNSLRKSTVGRSLKDRELCSGPSKLCQALAIDKSFDQRDLAQDDAVWLEHGPLESSSPAVVVAAARIGIGHAGEWTQKPLRFYVQGSPWVSVVDRVAEQMDQPQQTACSEGLLIVQK.

Residues 1–14 (MPARGGSARPGRGA) are compositionally biased toward low complexity. Residues 1 to 42 (MPARGGSARPGRGALKPVSVTLLPDTEQPPFLGRARRPGNAR) are disordered. Ser-98 and Ser-272 each carry phosphoserine.

This sequence belongs to the DNA glycosylase MPG family. In terms of assembly, binds MBD1. Binds SSBP1.

The protein resides in the cytoplasm. The protein localises to the mitochondrion matrix. It localises to the mitochondrion nucleoid. It is found in the nucleus. The enzyme catalyses Hydrolysis of alkylated DNA, releasing 3-methyladenine, 3-methylguanine, 7-methylguanine and 7-methyladenine.. Its activity is regulated as follows. Binding to SSBP1 in mitochondria inhibits glycosylase activity in the context of a single-stranded DNA (ssDNA), but not a double-stranded DNA (dsDNA) substrates. In terms of biological role, hydrolysis of the deoxyribose N-glycosidic bond to excise 3-methyladenine, and 7-methylguanine from the damaged DNA polymer formed by alkylation lesions. This is DNA-3-methyladenine glycosylase (Mpg) from Mus musculus (Mouse).